The following is a 66-amino-acid chain: Large ribosomal subunit protein bL33c (66 aa).

The protein belongs to the bacterial ribosomal protein bL33 family.

It is found in the plastid. The polypeptide is Large ribosomal subunit protein bL33c (Cuscuta gronovii (Common dodder)).